We begin with the raw amino-acid sequence, 431 residues long: Serine--tRNA ligase (431 aa).

236 to 238 (TAE) contacts L-serine. An ATP-binding site is contributed by 267-269 (RSE). Glutamate 290 contacts L-serine. 354 to 357 (EISS) contacts ATP. Residue serine 389 participates in L-serine binding.

It belongs to the class-II aminoacyl-tRNA synthetase family. Type-1 seryl-tRNA synthetase subfamily. Homodimer. The tRNA molecule binds across the dimer.

The protein localises to the cytoplasm. The catalysed reaction is tRNA(Ser) + L-serine + ATP = L-seryl-tRNA(Ser) + AMP + diphosphate + H(+). It catalyses the reaction tRNA(Sec) + L-serine + ATP = L-seryl-tRNA(Sec) + AMP + diphosphate + H(+). It participates in aminoacyl-tRNA biosynthesis; selenocysteinyl-tRNA(Sec) biosynthesis; L-seryl-tRNA(Sec) from L-serine and tRNA(Sec): step 1/1. Catalyzes the attachment of serine to tRNA(Ser). Is also able to aminoacylate tRNA(Sec) with serine, to form the misacylated tRNA L-seryl-tRNA(Sec), which will be further converted into selenocysteinyl-tRNA(Sec). This is Serine--tRNA ligase from Janthinobacterium sp. (strain Marseille) (Minibacterium massiliensis).